The following is an 894-amino-acid chain: DNA mismatch repair protein MutS (894 aa).

607–614 (GPNMSGKS) is an ATP binding site.

Belongs to the DNA mismatch repair MutS family.

In terms of biological role, this protein is involved in the repair of mismatches in DNA. It is possible that it carries out the mismatch recognition step. This protein has a weak ATPase activity. This Bacillus cereus (strain ZK / E33L) protein is DNA mismatch repair protein MutS.